The primary structure comprises 235 residues: Ribosomal RNA large subunit methyltransferase E (235 aa).

Positions 76, 78, 99, 115, and 139 each coordinate S-adenosyl-L-methionine. The active-site Proton acceptor is the lysine 179.

Belongs to the class I-like SAM-binding methyltransferase superfamily. RNA methyltransferase RlmE family.

The protein localises to the cytoplasm. It carries out the reaction uridine(2552) in 23S rRNA + S-adenosyl-L-methionine = 2'-O-methyluridine(2552) in 23S rRNA + S-adenosyl-L-homocysteine + H(+). Functionally, specifically methylates the uridine in position 2552 of 23S rRNA at the 2'-O position of the ribose in the fully assembled 50S ribosomal subunit. This is Ribosomal RNA large subunit methyltransferase E from Rhodopseudomonas palustris (strain BisA53).